The sequence spans 59 residues: Small, acid-soluble spore protein H (59 aa).

Belongs to the SspH family.

The protein resides in the spore core. The sequence is that of Small, acid-soluble spore protein H from Alkaliphilus metalliredigens (strain QYMF).